Consider the following 233-residue polypeptide: Protein lin-7 homolog A (233 aa).

The Kinase interacting site signature appears at 14-28 (MATLTVVQPLTLDRD). One can recognise an L27 domain in the interval 25-80 (LDRDVARAIELLEKLQESGEVPVHKLQSLKKVLQSEFCTAIREVYQYMHETITVNG). A PDZ domain is found at 108-190 (VVELPKTDEG…SVKLVVRYTP (83 aa)). Positions 214 to 233 (LLIQQQQQQQQQQPQQNHMS) are disordered.

This sequence belongs to the lin-7 family. Forms a complex with CASK and CASKIN1. Component of the brain-specific heterotrimeric complex (LIN-10-LIN-2-LIN-7 complex) composed of at least APBA1, CASK, and LIN7, which associates with the motor protein KIF17 to transport vesicles along microtubules. Can also interact with other modular proteins containing protein-protein interaction domains like PALS1, PALS2, MPP7, DLG1, DLG2 and DLG3 through its L27 domain. Interacts with DLG4, GRIN2B and MARCHF11 as well as CDH1 and CTNNB1, the channels KCNJ12/Kir2.2, KCNJ4/Kir2.3 and probably KCNJ2/Kir2.1 and SLC6A12/BGT-1 via its PDZ domain. The association of LIN7A with cadherin and beta-catenin is calcium-dependent, occurs at synaptic junctions and requires the actin cytoskeleton. Interacts with EGFR, ERBB2, ERBB3 and ERBB4 with both PDZ and KID domains. Associates with KIF17 via APBA1. Interacts with HTR4. Forms a tripartite complex composed of DLG1, MPP7 and LIN7 (LIN7A or LIN7C). In terms of tissue distribution, expressed in the kidney, along the length of the nephron.

The protein localises to the cell membrane. It localises to the basolateral cell membrane. Its subcellular location is the cell junction. The protein resides in the postsynaptic density membrane. It is found in the tight junction. In terms of biological role, plays a role in establishing and maintaining the asymmetric distribution of channels and receptors at the plasma membrane of polarized cells. Forms membrane-associated multiprotein complexes that may regulate delivery and recycling of proteins to the correct membrane domains. The tripartite complex composed of LIN7 (LIN7A, LIN7B or LIN7C), CASK and APBA1 associates with the motor protein KIF17 to transport vesicles containing N-methyl-D-aspartate (NMDA) receptor subunit NR2B along microtubules. This complex may have the potential to couple synaptic vesicle exocytosis to cell adhesion in brain. Ensures the proper localization of GRIN2B (subunit 2B of the NMDA receptor) to neuronal postsynaptic density and may function in localizing synaptic vesicles at synapses where it is recruited by beta-catenin and cadherin. Required to localize Kir2 channels, GABA transporter (SLC6A12) and EGFR/ERBB1, ERBB2, ERBB3 and ERBB4 to the basolateral membrane of epithelial cells. The polypeptide is Protein lin-7 homolog A (Lin7a) (Mus musculus (Mouse)).